The following is a 423-amino-acid chain: Serine--tRNA ligase (423 aa).

Basic and acidic residues-rich tracts occupy residues 1–24 and 62–71; these read MIDL…RGED and KMRDASPEEK. Positions 1 to 71 are disordered; the sequence is MIDLKQLRDD…KMRDASPEEK (71 aa). 230 to 232 is a binding site for L-serine; that stretch reads TSE. ATP is bound by residues 261-263 and V277; that span reads RRE. E284 contacts L-serine. 348 to 351 contacts ATP; sequence ELTS. T383 provides a ligand contact to L-serine.

Belongs to the class-II aminoacyl-tRNA synthetase family. Type-1 seryl-tRNA synthetase subfamily. As to quaternary structure, homodimer. The tRNA molecule binds across the dimer.

It is found in the cytoplasm. It catalyses the reaction tRNA(Ser) + L-serine + ATP = L-seryl-tRNA(Ser) + AMP + diphosphate + H(+). It carries out the reaction tRNA(Sec) + L-serine + ATP = L-seryl-tRNA(Sec) + AMP + diphosphate + H(+). The protein operates within aminoacyl-tRNA biosynthesis; selenocysteinyl-tRNA(Sec) biosynthesis; L-seryl-tRNA(Sec) from L-serine and tRNA(Sec): step 1/1. Functionally, catalyzes the attachment of serine to tRNA(Ser). Is also able to aminoacylate tRNA(Sec) with serine, to form the misacylated tRNA L-seryl-tRNA(Sec), which will be further converted into selenocysteinyl-tRNA(Sec). This chain is Serine--tRNA ligase, found in Corynebacterium kroppenstedtii (strain DSM 44385 / JCM 11950 / CIP 105744 / CCUG 35717).